The sequence spans 178 residues: Ribose 1,5-bisphosphate phosphokinase PhnN (178 aa).

Gly-9–Asp-16 provides a ligand contact to ATP.

It belongs to the ribose 1,5-bisphosphokinase family.

It catalyses the reaction alpha-D-ribose 1,5-bisphosphate + ATP = 5-phospho-alpha-D-ribose 1-diphosphate + ADP. Its pathway is metabolic intermediate biosynthesis; 5-phospho-alpha-D-ribose 1-diphosphate biosynthesis; 5-phospho-alpha-D-ribose 1-diphosphate from D-ribose 5-phosphate (route II): step 3/3. Catalyzes the phosphorylation of ribose 1,5-bisphosphate to 5-phospho-D-ribosyl alpha-1-diphosphate (PRPP). The protein is Ribose 1,5-bisphosphate phosphokinase PhnN of Pantoea vagans (strain C9-1) (Pantoea agglomerans (strain C9-1)).